Here is a 396-residue protein sequence, read N- to C-terminus: Purine ribonucleoside efflux pump NepI (396 aa).

Over 1–21 the chain is Cytoplasmic; it reads MSEFIAENRGADAITRPNWSA. The chain crosses the membrane as a helical span at residues 22-42; the sequence is VFSVAFCVACLIIVEFLPVSL. Topologically, residues 43–54 are periplasmic; sequence LTPMAQDLGISE. The helical transmembrane segment at 55–75 threads the bilayer; sequence GVAGQSVTVTAFVAMFASLFI. The Cytoplasmic portion of the chain corresponds to 76–85; that stretch reads TQTIQATDRC. The helical transmembrane segment at 86–106 threads the bilayer; the sequence is YVVILFAVLLTLSCLLVSFAN. A topological domain (periplasmic) is located at residue serine 107. A helical membrane pass occupies residues 108–128; it reads FSLLLIGRACLGLALGGFWAM. At 129–147 the chain is on the cytoplasmic side; the sequence is SASLTMRLVPPRTVPKALS. The chain crosses the membrane as a helical span at residues 148-168; the sequence is VIFGAVSIALVIAAPLGSFLG. The Periplasmic portion of the chain corresponds to 169–175; sequence ELIGWRN. A helical transmembrane segment spans residues 176–196; sequence VFNAAAVMGVLCIFWIIKSLP. At 197-215 the chain is on the cytoplasmic side; the sequence is SLPGEPSHQKQNTFRLLQR. The chain crosses the membrane as a helical span at residues 216 to 236; the sequence is PGVMAGMIAIFMSFAGQFAFF. Over 237–255 the chain is Periplasmic; sequence TYIRPVYMNLAGFGVDGLT. A helical membrane pass occupies residues 256 to 276; that stretch reads LVLLSFGIASFIGTSLSSFIL. Residues 277 to 281 are Cytoplasmic-facing; that stretch reads KRSVK. The helical transmembrane segment at 282–302 threads the bilayer; that stretch reads LALAGAPLILAVSALVLTLWG. At 303 to 305 the chain is on the periplasmic side; the sequence is SDK. A helical transmembrane segment spans residues 306-326; sequence IVATGVAIIWGLTFALVPVGW. At 327–343 the chain is on the cytoplasmic side; it reads STWITRSLADQAEKAGS. A helical membrane pass occupies residues 344–364; the sequence is IQVAVIQLANTCGAAIGGYAL. Topologically, residues 365–366 are periplasmic; that stretch reads DN. A helical membrane pass occupies residues 367-387; sequence IGLTSPLMLSGTLMLLTALLV. The Cytoplasmic segment spans residues 388 to 396; the sequence is TAKVKMKKS.

It belongs to the major facilitator superfamily. DHA1 family. NepI (TC 2.A.1.2.26) subfamily.

It is found in the cell inner membrane. The catalysed reaction is inosine(in) + H(+)(out) = inosine(out) + H(+)(in). It catalyses the reaction guanosine(in) + H(+)(out) = guanosine(out) + H(+)(in). Functionally, involved in the efflux of purine ribonucleosides, such as inosine and guanosine. This is Purine ribonucleoside efflux pump NepI from Shigella boydii serotype 4 (strain Sb227).